A 525-amino-acid polypeptide reads, in one-letter code: GMP synthase [glutamine-hydrolyzing] (525 aa).

Residues 9-207 enclose the Glutamine amidotransferase type-1 domain; sequence RILILDFGSQ…ILDICGCEAL (199 aa). Cysteine 86 serves as the catalytic Nucleophile. Active-site residues include histidine 181 and glutamate 183. Residues 208–400 form the GMPS ATP-PPase domain; sequence WTPSKIAEDA…LGLPYDMVYR (193 aa). 235 to 241 contacts ATP; sequence SGGVDSS.

In terms of assembly, homodimer.

It catalyses the reaction XMP + L-glutamine + ATP + H2O = GMP + L-glutamate + AMP + diphosphate + 2 H(+). It functions in the pathway purine metabolism; GMP biosynthesis; GMP from XMP (L-Gln route): step 1/1. In terms of biological role, catalyzes the synthesis of GMP from XMP. This chain is GMP synthase [glutamine-hydrolyzing], found in Pseudomonas syringae pv. syringae (strain B728a).